Here is a 240-residue protein sequence, read N- to C-terminus: Poxin (240 aa).

The Proton donor role is filled by H46. The active-site Shared with catalytic histidine of dimeric partner is the Y181. K185 functions as the Proton acceptor; shared with catalytic histidine of dimeric partner in the catalytic mechanism.

Belongs to the poxin family. As to quaternary structure, homodimer.

It catalyses the reaction 2',3'-cGAMP + H2O = Gp(2'-5')Ap(3') + H(+). Functionally, nuclease that cleaves host 2',3'-cGAMP. This Lepidoptera (butterflies and moths) protein is Poxin (P26).